The primary structure comprises 85 residues: Major outer membrane protein 1 (85 aa).

The signal sequence occupies residues 1–18; the sequence is MEAREVEEMRRSRLLTLG. Residues 22-42 traverse the membrane as a helical segment; it reads YTAVIALAALVLVMGALGLVL.

As to quaternary structure, forms extremely stable complexes with apparent masses of 150, 50, 45 and 38 kDa. Found in a ring-shaped complex of 7 nm diameter with a 2 nm channel through the middle. Complete denaturation requires temperatures over 110 degrees Celsius.

The protein resides in the cell outer membrane. Its function is as follows. The most abundant protein of the outer membrane, it forms a pore through it. This is Major outer membrane protein 1 (ihomp1) from Ignicoccus hospitalis (strain KIN4/I / DSM 18386 / JCM 14125).